The chain runs to 159 residues: NADH-quinone oxidoreductase subunit I (159 aa).

2 4Fe-4S ferredoxin-type domains span residues arginine 51–aspartate 80 and threonine 90–asparagine 119. [4Fe-4S] cluster is bound by residues cysteine 60, cysteine 63, cysteine 66, cysteine 70, cysteine 99, cysteine 102, cysteine 105, and cysteine 109.

It belongs to the complex I 23 kDa subunit family. NDH-1 is composed of 14 different subunits. Subunits NuoA, H, J, K, L, M, N constitute the membrane sector of the complex. The cofactor is [4Fe-4S] cluster.

Its subcellular location is the cell inner membrane. The enzyme catalyses a quinone + NADH + 5 H(+)(in) = a quinol + NAD(+) + 4 H(+)(out). Its function is as follows. NDH-1 shuttles electrons from NADH, via FMN and iron-sulfur (Fe-S) centers, to quinones in the respiratory chain. The immediate electron acceptor for the enzyme in this species is believed to be ubiquinone. Couples the redox reaction to proton translocation (for every two electrons transferred, four hydrogen ions are translocated across the cytoplasmic membrane), and thus conserves the redox energy in a proton gradient. This Rickettsia bellii (strain OSU 85-389) protein is NADH-quinone oxidoreductase subunit I.